Reading from the N-terminus, the 892-residue chain is Transposase for transposon Tn4556 (892 aa).

A compositionally biased stretch (basic and acidic residues) spans 1-12; it reads MGGRAGLDDGRG. Residues 1 to 63 are disordered; that stretch reads MGGRAGLDDG…GQPARDAEHR (63 aa). Low complexity predominate over residues 23–34; the sequence is VAEGAAGAAAWG.

The protein belongs to the transposase 7 family.

In terms of biological role, required for transposition of transposon Tn4556. The sequence is that of Transposase for transposon Tn4556 (tnpA) from Streptomyces fradiae (Streptomyces roseoflavus).